Here is a 544-residue protein sequence, read N- to C-terminus: MNRCAEAAAVAATVPGSGVGDSGLRPPMVPRQASFFPPPVPNPFVQQTRISAARRLQMILLGIILLPVRALLVGLVLLLAWPFAVISTVCCPKKLTHPISDWRRKITQPALKFLGRAMFFSMGFRVTVKGKVASPLEAPIFVVAPHSTFFDGIACVVAGLPSLVSRNENAQTPLVGRLLRALQPVLVSRVDPDSRKNTINEIKKRAMSGGEWPQILVFPEGTCTNRSCLITFKPGAFIPGVPVQPVLLRYPNKLDTVTWTWQGYTFIQLCVLTFCQLFTKVEVEFMPVQAPSEEERNDPVLFASRVRNLMAEALEIPVTDHTYEDCRLMISAGQLTLPMEAGLVEFTKISRKLKLDWDGIRKHLDEYASIASSAKGGRIGASSAKGGRIGPVSDVLRQLFALFDRNNDGSIDFREYVIGLAVLCNPANTEDIIQVAFKLFDVDEDGYITEEEFCTILQASLGVPDLNVSGLFREIAQGDSVSYEEFKSFALKHPEYAKIFTTYLDLQTCHVFSLPEDVQTAPSVASNKVSPESHEEGTSGKKVD.

The Cytoplasmic portion of the chain corresponds to methionine 1 to methionine 58. The chain crosses the membrane as a helical; Signal-anchor for type II membrane protein span at residues isoleucine 59–leucine 79. The Lumenal segment spans residues alanine 80–aspartate 544. Residues histidine 146–aspartate 151 carry the HXXXXD motif motif. An EGTC motif motif is present at residues glutamate 220–cysteine 223. EF-hand domains are found at residues proline 391–proline 426 and asparagine 428–valine 463. Ca(2+)-binding residues include aspartate 404, asparagine 406, aspartate 408, serine 410, glutamate 415, aspartate 441, aspartate 443, aspartate 445, tyrosine 447, and glutamate 452. Residues threonine 520–serine 530 show a composition bias toward polar residues. The disordered stretch occupies residues threonine 520–aspartate 544. The span at proline 531–aspartate 544 shows a compositional bias: basic and acidic residues.

This sequence belongs to the 1-acyl-sn-glycerol-3-phosphate acyltransferase family.

It localises to the endoplasmic reticulum membrane. The protein localises to the golgi apparatus membrane. It is found in the cell membrane. The protein resides in the lipid droplet. It catalyses the reaction a 1-acyl-sn-glycero-3-phosphocholine + an acyl-CoA = a 1,2-diacyl-sn-glycero-3-phosphocholine + CoA. The enzyme catalyses a 1-O-alkyl-sn-glycero-3-phosphocholine + acetyl-CoA = a 1-O-alkyl-2-acetyl-sn-glycero-3-phosphocholine + CoA. It carries out the reaction a 1-acyl-sn-glycero-3-phosphate + an acyl-CoA = a 1,2-diacyl-sn-glycero-3-phosphate + CoA. The catalysed reaction is a 1-O-(1Z-alkenyl)-sn-glycero-3-phosphocholine + an acyl-CoA = a 1-O-(1Z-alkenyl)-2-acyl-sn-glycero-3-phosphocholine + CoA. It catalyses the reaction 1-hexadecanoyl-sn-glycero-3-phosphate + (9Z)-octadecenoyl-CoA = 1-hexadecanoyl-2-(9Z-octadecenoyl)-sn-glycero-3-phosphate + CoA. The enzyme catalyses 1-(9Z-octadecenoyl)-sn-glycero-3-phosphate + (9Z)-octadecenoyl-CoA = 1,2-di-(9Z-octadecenoyl)-sn-glycero-3-phosphate + CoA. It carries out the reaction 1-(9Z-octadecenoyl)-sn-glycero-3-phosphate + hexadecanoyl-CoA = 1-(9Z)-octadecenoyl-2-hexadecanoyl-sn-glycero-3-phosphate + CoA. The catalysed reaction is 1-heptadecanoyl-sn-glycero-3-phosphate + (9Z)-octadecenoyl-CoA = 1-heptadecanoyl-2-(9Z)-octadecenoyl-sn-glycero-3-phosphate + CoA. It catalyses the reaction 1-octadecanoyl-sn-glycero-3-phosphate + (9Z)-octadecenoyl-CoA = 1-octadecanoyl-2-(9Z-octadecenoyl)-sn-glycero-3-phosphate + CoA. The enzyme catalyses heptadecanoyl-CoA + 1-(9Z-octadecenoyl)-sn-glycero-3-phosphate = 1-(9Z)-octadecenoyl-2-heptadecanoyl-sn-glycero-3-phosphate + CoA. It carries out the reaction 1-(9Z-octadecenoyl)-sn-glycero-3-phosphate + (9Z,12Z)-octadecadienoyl-CoA = 1-(9Z)-octadecenoyl-2-(9Z,12Z)-octadecadienoyl-sn-glycero-3-phosphate + CoA. The catalysed reaction is 1-(9Z-octadecenoyl)-sn-glycero-3-phosphate + tetradecanoyl-CoA = 1-(9Z)-octadecenoyl-2-tetradecanoyl-sn-glycero-3-phosphate + CoA. It catalyses the reaction pentadecanoyl-CoA + 1-(9Z-octadecenoyl)-sn-glycero-3-phosphate = 1-(9Z)-octadecenoyl-2-pentadecanoyl-sn-glycero-3-phosphate + CoA. The enzyme catalyses nonadecanoyl-CoA + 1-(9Z-octadecenoyl)-sn-glycero-3-phosphate = 1-(9Z)-octadecenoyl-2-nonadecanoyl-sn-glycero-3-phosphate + CoA. It carries out the reaction 1-hexadecanoyl-sn-glycero-3-phosphocholine + (9Z)-octadecenoyl-CoA = 1-hexadecanoyl-2-(9Z-octadecenoyl)-sn-glycero-3-phosphocholine + CoA. The catalysed reaction is 1-O-hexadecyl-sn-glycero-3-phosphocholine + acetyl-CoA = 1-O-hexadecyl-2-acetyl-sn-glycero-3-phosphocholine + CoA. It catalyses the reaction 1-O-octadecyl-sn-glycero-3-phosphocholine + acetyl-CoA = 1-O-octadecyl-2-acetyl-sn-glycero-3-phosphocholine + CoA. The enzyme catalyses 1-hexadecanoyl-sn-glycero-3-phosphocholine + acetyl-CoA = 1-hexadecanoyl-2-acetyl-sn-glycero-3-phosphocholine + CoA. It carries out the reaction 1-octadecanoyl-sn-glycero-3-phosphocholine + acetyl-CoA = 1-octadecanoyl-2-acetyl-sn-glycero-3-phosphocholine + CoA. The catalysed reaction is a 1-O-(1Z-alkenyl)-sn-glycero-3-phosphocholine + acetyl-CoA = 1-O-(1Z)-alkenyl-2-acetyl-sn-glycero-3-phosphocholine + CoA. It catalyses the reaction 1-O-octadecyl-sn-glycero-3-phosphocholine + (5Z,8Z,11Z,14Z)-eicosatetraenoyl-CoA = 1-O-octadecyl-2-(5Z,8Z,11Z,14Z)-eicosatetraenoyl-sn-glycero-3-phosphocholine + CoA. It functions in the pathway lipid metabolism; phospholipid metabolism. Its function is as follows. Exhibits both acyltransferase and acetyltransferase activities. Activity is calcium-dependent. Catalyzes the conversion of lysophosphatidylcholine (1-acyl-sn-glycero-3-phosphocholine or LPC) into phosphatidylcholine (1,2-diacyl-sn-glycero-3-phosphocholine or PC). Catalyzes the conversion 1-acyl-sn-glycerol-3-phosphate (lysophosphatidic acid or LPA) into 1,2-diacyl-sn-glycerol-3-phosphate (phosphatidic acid or PA) by incorporating an acyl moiety at the sn-2 position of the glycerol backbone. Involved in platelet-activating factor (PAF) biosynthesis by catalyzing the conversion of the PAF precursor, 1-O-alkyl-sn-glycero-3-phosphocholine (lyso-PAF) into 1-O-alkyl-2-acetyl-sn-glycero-3-phosphocholine (PAF). Also converts lyso-PAF to 1-O-alkyl-2-acyl-sn-glycero-3-phosphocholine (PC), a major component of cell membranes and a PAF precursor. Under resting conditions, acyltransferase activity is preferred. Upon acute inflammatory stimulus, acetyltransferase activity is enhanced and PAF synthesis increases. Involved in the regulation of lipid droplet number and size. The chain is Lysophosphatidylcholine acyltransferase 2 (Lpcat2) from Rattus norvegicus (Rat).